A 1245-amino-acid polypeptide reads, in one-letter code: MGYFQMTRNVEEIFGGVVVAPHQIPFKYTSTNGGETFLSLPFYPITGFVTINSGVQVPIDNFEIDGNTLNLGRELEPGDVVFCLFDKIMSPQDASNNAVRIYKFLSVGGETEFTPDFTAYGVQSLYIDGKYKTPGEDYNYFKTSGKVVLDTALPTGVWVVAEMSIKQNIPALAGNNGASEIGTNSGKSLAESLGTWIDTTIAIFEMTEAPSVIQTRGFYETNDGGAGVWVATGIISPSLAGTHVPSQAKVYNAGGVEYQLNVKSGFEISAKANGVKAVDDVNAETEDFVCLGEAINGITSRVKTMVNDEDLKTYLKVIIPSEYPLRIGKTSIKAYSRLKLDFQQASIYDRPSPSNRQEVTGVYMNAIERGIEDVRAISARFGGATSYSNMTLSDFHIEGGKFYGDHTTDKGVADCSTGTGLFTYNMENSSIRNTWFQGFACGRQYNRTGPGYYFDNLGNKVVGTLVPEVTSSGTGSYEGVKEWSVTAYGCRYLYLRVLSNWARFDNCKFGTYANWSSSPDGNQCEYFIENRGAGVVFSGGVIEANTAAANPTKGFVRDYARGCTFEGVYYENCLSAGWVIAIPEKSQYNRANGLFLTAIGSQFTLSSQGAPLVKFEEGYFGSYNPATGLYKTGGWETNYQYAGGVNTWAVGQPELDSGAFPHGGYDFKYGTYGIHYSGSVPDADSLRDTQEGNEFLSPYGLSVNSGILLFPTLSPAYQSNIVVWYKDLTGNFDPRNIVVGDFDNNNVSDGTSNALYRTNGFNYYDYGNGYKAAIVPYVNPRALDNRMTTSAGRKLKITVTSDAPIILKSIQAFVGGTPIFPPAIKDYVPRSQRDRIWGTMSAGSTDSGAYYGPLVGGGIFRPGDVVLPFVPFGNAALMNPASYTDNSSGFGASAETAVITGGATWGAGLAGATFTLTVESQDTINNWTTVSVPSAYLPYIFTGMPVYITANSSGGSTGLINTVRRVVNSDGTLSNKYVLYGALGAAGTTLTVSTTSSYTVRSGVSSTLTGVSGSFSASSWLGTASGDLRVGFGASGSGTRQTRYYYNGADVSAVVGSSGANALHLTGTGGITLNGSLLTSTSYSFGSASAYPANIYSQNAVTVVSDVHYKMDIVELNDAEIECAKACAKLYRRYKLKTAVAIKGEDGARYHVGTIAQLVMQAFTDAGLDWTKYGIITYESWEASDAVVETVGAVYDEEGNELVPETIMVVTPAKEAGEIYMVRYDEFNSFVMAGQEARLQALEEK.

Positions 1105–1245 constitute a Peptidase S74 domain; sequence SDVHYKMDIV…EARLQALEEK (141 aa).

In terms of processing, proteolytic cleavage and release of the chaperone in the host cytosol stabilizes the folded protein. The cleavage gives rise to the mature tail spike protein but is not essential for catalytic activity.

It is found in the virion. Functions as a receptor binding protein (RBP) and probably mediates the attachment to the host capsular exopolysaccharides. Displays a depolymerase activity that specifically degrades the KN2-type polysaccharides of Klebsiella pneumoniae capsule. Its function is as follows. The C-terminal chaperone protein mediates homotrimerization and proper folding of the catalytic trimer. This Klebsiella (Taipeivirus 0507KN21) protein is Probable tail spike protein.